A 231-amino-acid polypeptide reads, in one-letter code: NADH-ubiquinone oxidoreductase chain 4 (231 aa).

A run of 6 helical transmembrane segments spans residues P1–I21, M34–L54, I63–G85, A89–Y111, I128–P148, and F156–S176.

Belongs to the complex I subunit 4 family.

The protein localises to the mitochondrion membrane. It carries out the reaction a ubiquinone + NADH + 5 H(+)(in) = a ubiquinol + NAD(+) + 4 H(+)(out). Its function is as follows. Core subunit of the mitochondrial membrane respiratory chain NADH dehydrogenase (Complex I) that is believed to belong to the minimal assembly required for catalysis. Complex I functions in the transfer of electrons from NADH to the respiratory chain. The immediate electron acceptor for the enzyme is believed to be ubiquinone. The chain is NADH-ubiquinone oxidoreductase chain 4 (MT-ND4) from Bothriechis schlegelii (Eyelash palm pitviper).